The primary structure comprises 229 residues: Ribonuclease T (229 aa).

Positions 23–197 (VIIDVETAGF…YDTERTAKLF (175 aa)) constitute an Exonuclease domain. Residues D26, E28, H184, and D189 each coordinate Mg(2+). The active-site Proton donor/acceptor is the H184.

This sequence belongs to the RNase T family. As to quaternary structure, homodimer. Mg(2+) is required as a cofactor.

Trims short 3' overhangs of a variety of RNA species, leaving a one or two nucleotide 3' overhang. Responsible for the end-turnover of tRNA: specifically removes the terminal AMP residue from uncharged tRNA (tRNA-C-C-A). Also appears to be involved in tRNA biosynthesis. This is Ribonuclease T from Haemophilus influenzae (strain 86-028NP).